A 217-amino-acid polypeptide reads, in one-letter code: Ras-related protein RIC2 (217 aa).

GTP contacts are provided by residues 21 to 28, 69 to 73, and 127 to 130; these read GDSGVGKS, DTAGQ, and NKSD. Residues C214 and C215 are each lipidated (S-geranylgeranyl cysteine).

It belongs to the small GTPase superfamily. Rab family.

It localises to the cell membrane. Functionally, possesses GTPase activity. The chain is Ras-related protein RIC2 (RIC2) from Oryza sativa subsp. japonica (Rice).